Here is a 176-residue protein sequence, read N- to C-terminus: Putative ribosomal protein eS10-like (176 aa).

Residues 104-176 form a disordered region; it reads TLHRSRPETG…CGRGRGQPPQ (73 aa). The span at 108-139 shows a compositional bias: basic and acidic residues; the sequence is SRPETGRPRPKGLEGKRPARLTRREADRDTYR.

The protein belongs to the eukaryotic ribosomal protein eS10 family.

The chain is Putative ribosomal protein eS10-like (RPS10P5) from Homo sapiens (Human).